A 286-amino-acid chain; its full sequence is Ribosomal RNA small subunit methyltransferase I (286 aa).

This sequence belongs to the methyltransferase superfamily. RsmI family.

The protein localises to the cytoplasm. The catalysed reaction is cytidine(1402) in 16S rRNA + S-adenosyl-L-methionine = 2'-O-methylcytidine(1402) in 16S rRNA + S-adenosyl-L-homocysteine + H(+). In terms of biological role, catalyzes the 2'-O-methylation of the ribose of cytidine 1402 (C1402) in 16S rRNA. In Escherichia coli O157:H7, this protein is Ribosomal RNA small subunit methyltransferase I.